The chain runs to 313 residues: Homoserine O-succinyltransferase (313 aa).

The active-site Acyl-thioester intermediate is cysteine 142. Lysine 163 and serine 192 together coordinate substrate. The Proton acceptor role is filled by histidine 235. Glutamate 237 is a catalytic residue. Arginine 249 is a binding site for substrate.

The protein belongs to the MetA family.

It localises to the cytoplasm. It catalyses the reaction L-homoserine + succinyl-CoA = O-succinyl-L-homoserine + CoA. It functions in the pathway amino-acid biosynthesis; L-methionine biosynthesis via de novo pathway; O-succinyl-L-homoserine from L-homoserine: step 1/1. Transfers a succinyl group from succinyl-CoA to L-homoserine, forming succinyl-L-homoserine. This is Homoserine O-succinyltransferase from Vibrio vulnificus (strain CMCP6).